Here is a 221-residue protein sequence, read N- to C-terminus: Nucleolar protein 3 (221 aa).

Gly-2 is lipidated: N-myristoyl glycine. The CARD domain occupies Met-4–His-95. Positions Val-20–Glu-70 are essential for interaction with BAX. The interval Pro-107–Thr-221 is disordered. Residues Glu-132–Glu-143 show a composition bias toward acidic residues. Thr-149 is modified (phosphothreonine; by CK2). 2 stretches are compositionally biased toward acidic residues: residues Pro-165 to Pro-201 and Phe-209 to Thr-221.

Oligomerizes (via CARD doamin). Interacts (via CARD domain) with CASP2; inhibits CASP2 activity in a phosphorylation-dependent manner. Interacts with CASP8; decreases CASP8 activity in a mitochondria localization- and phosphorylation-dependent manner and this interaction is dissociated by calcium. Interacts with TFPT; translocates NOL3 into the nucleus and negatively regulated TFPT-induced cell death. Interacts directly (via CARD domain) with FAS and FADD (via DED domain); inhibits death-inducing signaling complex (DISC) assembly by inhibiting the increase in FAS-FADD binding induced by FAS activation. Interacts (via CARD domain) with BAX (via a C-terminal 33 residues); inhibits BAX activation and translocation and consequently cytochrome c release from mitochondria. Interacts with PPM1G; may dephosphorylate NOL3. Interacts (via CARD domain) with BBC3 (via BH3 domain); preventing the association of BBC3 with BCL2 and resulting in activation of CASP8. Interacts (via CARD domain) with BAD(via BH3 domain); preventing the association of BAD with BCL2. Interacts directly (via CARD domain) with TNFRSF1A; inhibits TNF-signaling pathway. In terms of processing, phosphorylation at Thr-149 is required for its antiapoptotic effect by blocking death-inducing signaling complex (DISC) activity through the control of interaction with CASP8. Phosphorylation at Thr-149 results in translocation to mitochondria and this translocation enables the binding to CASP8. Dephosphorylated at Thr-149 by calcineurin; doesn't inhibit the association between FADD and CASP8 and the consequent apoptosis. Polyubiquitinated by MDM2; promoting proteasomal-dependent degradation in response to apoptotic stimuli. As to expression, highly expressed in skeletal muscle, heart and medulla.

The protein localises to the cytoplasm. The protein resides in the mitochondrion. It localises to the sarcoplasmic reticulum. Its subcellular location is the membrane. Its function is as follows. Apoptosis repressor that blocks multiple modes of cell death. Inhibits extrinsic apoptotic pathways through two different ways. Firstly by interacting with FAS and FADD upon FAS activation blocking death-inducing signaling complex (DISC) assembly. Secondly by interacting with CASP8 in a mitochondria localization- and phosphorylation-dependent manner, limiting the amount of soluble CASP8 available for DISC-mediated activation. Inhibits intrinsic apoptotic pathway in response to a wide range of stresses, through its interaction with BAX resulting in BAX inactivation, preventing mitochondrial dysfunction and release of pro-apoptotic factors. Inhibits calcium-mediated cell death by functioning as a cytosolic calcium buffer, dissociating its interaction with CASP8 and maintaining calcium homeostasis. Negatively regulates oxidative stress-induced apoptosis by phosphorylation-dependent suppression of the mitochondria-mediated intrinsic pathway, by blocking CASP2 activation and BAX translocation. Negatively regulates hypoxia-induced apoptosis in part by inhibiting the release of cytochrome c from mitochondria in a caspase-independent manner. Also inhibits TNF-induced necrosis by preventing TNF-signaling pathway through TNFRSF1A interaction abrogating the recruitment of RIPK1 to complex I. Finally through its role as apoptosis repressor, promotes vascular remodeling through inhibition of apoptosis and stimulation of proliferation, in response to hypoxia. Inhibits too myoblast differentiation through caspase inhibition. In Rattus norvegicus (Rat), this protein is Nucleolar protein 3 (Nol3).